Consider the following 90-residue polypeptide: UPF0298 protein SSU98_1559 (90 aa).

This sequence belongs to the UPF0298 family.

The protein resides in the cytoplasm. The polypeptide is UPF0298 protein SSU98_1559 (Streptococcus suis (strain 98HAH33)).